The primary structure comprises 1737 residues: Myosin-M heavy chain (1737 aa).

The Myosin N-terminal SH3-like domain maps to 4-55 (LEGDIVWVPHTVNGYCRGKIIGYNEKNQVTVRLLELNEEIKINEQLIQNYNQ). The Myosin motor domain maps to 59 to 886 (KDFSDMVEIQ…LYIYLEKKRY (828 aa)). 154–161 (GESGSGKT) contacts ATP. Positions 640–727 (KSNDNNSNNN…NNNSSNNKKS (88 aa)) are disordered. 2 stretches are compositionally biased toward low complexity: residues 641–663 (SNDN…SSQS) and 679–724 (NSGS…SSNN). Positions 754–761 (YIRCIKPN) are actin-binding. IQ domains follow at residues 889–918 (LVDS…SSLF) and 912–941 (NKES…LENK). Positions 926–1039 (QRAKKDFEQL…KKKNEQNLSL (114 aa)) form a coiled coil. A compositionally biased stretch (basic and acidic residues) spans 947–1028 (RKKELERQRK…IEKKRKEEEK (82 aa)). 4 disordered regions span residues 947–1099 (RKKE…PSTK), 1117–1199 (LHGS…PNFN), 1266–1290 (GINK…ANSS), and 1304–1364 (SLST…SNED). Positions 1044-1070 (ITNSPSLINTTTTTTTTTTTTTNTSSP) are enriched in low complexity. The span at 1071–1081 (PLSPPISPRPS) shows a compositional bias: pro residues. Residues 1082 to 1098 (TPSSTSSSSSTTSSPST) are compositionally biased toward low complexity. Positions 1121 to 1131 (SHSDKNSKEDN) are enriched in basic and acidic residues. Residues 1132-1141 (NSNNNNNGDS) are compositionally biased toward low complexity. Positions 1143-1153 (IILSSDSSFGQ) are enriched in polar residues. The span at 1162 to 1171 (PTPPPPPPLK) shows a compositional bias: pro residues. 2 stretches are compositionally biased toward polar residues: residues 1180-1198 (GVEN…SPNF) and 1274-1288 (RTIS…SRAN). Residues 1304-1359 (SLSTSTTPSTPTTPKTPTTLSSSSVSTSTSLSSVSSSVSSSSSSSIPTPIIESTPS) are compositionally biased toward low complexity. Positions 1389–1572 (FRIKIINELI…SDIVQSINEA (184 aa)) constitute a DH domain. The PH domain maps to 1603 to 1714 (TLLMEGTVSA…WFKQIKALIQ (112 aa)).

This sequence belongs to the TRAFAC class myosin-kinesin ATPase superfamily. Myosin family. As to quaternary structure, monomer.

The protein resides in the cytoplasm. Its function is as follows. Myosins are actin-based motor molecules with ATPase activity. Involved in macropinocytosis and remodeling of actin cytoskeleton. This Dictyostelium discoideum (Social amoeba) protein is Myosin-M heavy chain (myoM).